A 431-amino-acid polypeptide reads, in one-letter code: Enolase (431 aa).

Gln167 provides a ligand contact to (2R)-2-phosphoglycerate. The active-site Proton donor is the Glu209. Mg(2+) is bound by residues Asp246, Glu290, and Asp317. Residues Lys342, Arg371, Ser372, and Lys393 each coordinate (2R)-2-phosphoglycerate. Catalysis depends on Lys342, which acts as the Proton acceptor.

This sequence belongs to the enolase family. Component of the RNA degradosome, a multiprotein complex involved in RNA processing and mRNA degradation. It depends on Mg(2+) as a cofactor.

The protein localises to the cytoplasm. It is found in the secreted. It localises to the cell surface. It carries out the reaction (2R)-2-phosphoglycerate = phosphoenolpyruvate + H2O. Its pathway is carbohydrate degradation; glycolysis; pyruvate from D-glyceraldehyde 3-phosphate: step 4/5. Catalyzes the reversible conversion of 2-phosphoglycerate (2-PG) into phosphoenolpyruvate (PEP). It is essential for the degradation of carbohydrates via glycolysis. The chain is Enolase from Pectobacterium atrosepticum (strain SCRI 1043 / ATCC BAA-672) (Erwinia carotovora subsp. atroseptica).